An 871-amino-acid chain; its full sequence is Envelope glycoprotein gp160 (871 aa).

Positions 1-21 are cleaved as a signal peptide; it reads MKNLIGITLILIITILGIGFS. The Extracellular portion of the chain corresponds to 22 to 684; sequence TYYTTVFYGV…DITQWLWYIK (663 aa). Cys-43 and Cys-63 are disulfide-bonded. Residues Asn-77, Asn-124, Asn-127, Asn-142, Asn-153, Asn-157, Asn-185, Asn-194, Asn-229, Asn-238, Asn-259, Asn-273, Asn-285, Asn-289, Asn-297, Asn-329, Asn-345, Asn-352, Asn-384, Asn-387, Asn-395, Asn-398, Asn-438, Asn-451, and Asn-496 are each glycosylated (N-linked (GlcNAc...) asparagine; by host). Disulfide bonds link Cys-108/Cys-202, Cys-115/Cys-193, Cys-120/Cys-154, Cys-215/Cys-244, and Cys-225/Cys-236. The tract at residues 120-153 is V1; it reads CTMTNTTNKTLNSATTTLTPTVNLSSIPNYEVYN. Residues 154–193 are V2; that stretch reads CSFNQTTEFRDKKKQIYSLFYREDIVKEDGNNNSYYLHNC. The segment at 292 to 325 is V3; that stretch reads CERTGNNTRGQVQIGPGMTFYNIENVVGDTRKAY. Cysteines 292 and 326 form a disulfide. 2 cysteine pairs are disulfide-bonded: Cys-376/Cys-435 and Cys-383/Cys-408. Positions 383–408 are V4; the sequence is CNLTNWTNTWTANRTNNTHGTLVAPC. Residues 451–458 form a V5 region; sequence NNSYTPQF. The interval 502–522 is fusion peptide; sequence RDVGIGLLFLGFLSAAGSTMG. Residues 567-583 are immunosuppression; the sequence is LQARMLAVEKYIRDQQL. Asn-602, Asn-613, Asn-626, and Asn-638 each carry an N-linked (GlcNAc...) asparagine; by host glycan. A coiled-coil region spans residues 645-668; sequence SLLEKAQTQQEKNKQELLELDKWS. The interval 663–684 is MPER; binding to GalCer; sequence ELDKWSSLWDWFDITQWLWYIK. The chain crosses the membrane as a helical span at residues 685–705; that stretch reads IAIIIVAGLVGLRILMFIVNV. Residues 706 to 871 are Cytoplasmic-facing; the sequence is VKQVRQGYTP…IRQGLELALN (166 aa). The short motif at 713–716 is the YXXL motif; contains endocytosis signal element; the sequence is YTPL.

In terms of assembly, the mature envelope protein (Env) consists of a homotrimer of non-covalently associated gp120-gp41 heterodimers. The resulting complex protrudes from the virus surface as a spike. Interacts with host CD4 and CCR5. Gp120 also interacts with the C-type lectins CD209/DC-SIGN and CLEC4M/DC-SIGNR (collectively referred to as DC-SIGN(R)). The mature envelope protein (Env) consists of a homotrimer of non-covalently associated gp120-gp41 heterodimers. The resulting complex protrudes from the virus surface as a spike. Specific enzymatic cleavages in vivo yield mature proteins. Envelope glycoproteins are synthesized as an inactive precursor that is heavily N-glycosylated and processed likely by host cell furin in the Golgi to yield the mature SU and TM proteins. The cleavage site between SU and TM requires the minimal sequence [KR]-X-[KR]-R.

Its subcellular location is the virion membrane. The protein localises to the host cell membrane. It localises to the host endosome membrane. The surface protein gp120 (SU) attaches the virus to the host lymphoid cell by binding to the primary receptor CD4. This interaction induces a structural rearrangement creating a high affinity binding site for a chemokine coreceptor like CCR5. This peculiar 2 stage receptor-interaction strategy allows gp120 to maintain the highly conserved coreceptor-binding site in a cryptic conformation, protected from neutralizing antibodies. These changes are transmitted to the transmembrane protein gp41 and are thought to activate its fusogenic potential by unmasking its fusion peptide. Functionally, surface protein gp120 (SU) may target the virus to gut-associated lymphoid tissue (GALT) by binding host ITGA4/ITGB7 (alpha-4/beta-7 integrins), a complex that mediates T-cell migration to the GALT. Interaction between gp120 and ITGA4/ITGB7 would allow the virus to enter GALT early in the infection, infecting and killing most of GALT's resting CD4+ T-cells. This T-cell depletion is believed to be the major insult to the host immune system leading to AIDS. Its function is as follows. The surface protein gp120 is a ligand for CD209/DC-SIGN and CLEC4M/DC-SIGNR, which are respectively found on dendritic cells (DCs), and on endothelial cells of liver sinusoids and lymph node sinuses. These interactions allow capture of viral particles at mucosal surfaces by these cells and subsequent transmission to permissive cells. DCs are professional antigen presenting cells, critical for host immunity by inducing specific immune responses against a broad variety of pathogens. They act as sentinels in various tissues where they take up antigen, process it, and present it to T-cells following migration to lymphoid organs. SIV subverts the migration properties of dendritic cells to gain access to CD4+ T-cells in lymph nodes. Virus transmission to permissive T-cells occurs either in trans (without DCs infection, through viral capture and transmission), or in cis (following DCs productive infection, through the usual CD4-gp120 interaction), thereby inducing a robust infection. In trans infection, bound virions remain infectious over days and it is proposed that they are not degraded, but protected in non-lysosomal acidic organelles within the DCs close to the cell membrane thus contributing to the viral infectious potential during DCs' migration from the periphery to the lymphoid tissues. On arrival at lymphoid tissues, intact virions recycle back to DCs' cell surface allowing virus transmission to CD4+ T-cells. Virion capture also seems to lead to MHC-II-restricted viral antigen presentation, and probably to the activation of SIV-specific CD4+ cells. In terms of biological role, the transmembrane protein gp41 (TM) acts as a class I viral fusion protein. Under the current model, the protein has at least 3 conformational states: pre-fusion native state, pre-hairpin intermediate state, and post-fusion hairpin state. During fusion of viral and target intracellular membranes, the coiled coil regions (heptad repeats) assume a trimer-of-hairpins structure, positioning the fusion peptide in close proximity to the C-terminal region of the ectodomain. The formation of this structure appears to drive apposition and subsequent fusion of viral and target cell membranes. Complete fusion occurs in host cell endosomes. The virus undergoes clathrin-dependent internalization long before endosomal fusion, thus minimizing the surface exposure of conserved viral epitopes during fusion and reducing the efficacy of inhibitors targeting these epitopes. Membranes fusion leads to delivery of the nucleocapsid into the cytoplasm. The envelope glycoprotein gp160 precursor down-modulates cell surface CD4 antigen by interacting with it in the endoplasmic reticulum and blocking its transport to the cell surface. Functionally, the gp120-gp41 heterodimer allows rapid transcytosis of the virus through CD4 negative cells such as simple epithelial monolayers of the intestinal, rectal and endocervical epithelial barriers. Both gp120 and gp41 specifically recognize glycosphingolipids galactosyl-ceramide (GalCer) or 3' sulfo-galactosyl-ceramide (GalS) present in the lipid rafts structures of epithelial cells. Binding to these alternative receptors allows the rapid transcytosis of the virus through the epithelial cells. This transcytotic vesicle-mediated transport of virions from the apical side to the basolateral side of the epithelial cells does not involve infection of the cells themselves. The polypeptide is Envelope glycoprotein gp160 (Simian immunodeficiency virus (isolate TAN1) (SIV-cpz)).